Consider the following 226-residue polypeptide: E3 ubiquitin-protein ligase RNF186 (226 aa).

Residues 39–85 (CLVCREPYSGVRPPKLLGCQHAFCAVCLKLLLCVQDDAWSIPCPLCR) form an RING-type zinc finger. The tract at residues 121 to 143 (GLANPATLTAGQPREAGEEEQDA) is disordered. Helical transmembrane passes span 157-177 (HLLLLVLLIILILPFIYPGVI) and 179-199 (WVLSFLETLALLLALLFCSHP).

Interacts with BNIP1. Post-translationally, polyubiquitinated. 'Lys-29' autoubiquitination leads to proteasomal degradation.

It is found in the endoplasmic reticulum membrane. The enzyme catalyses S-ubiquitinyl-[E2 ubiquitin-conjugating enzyme]-L-cysteine + [acceptor protein]-L-lysine = [E2 ubiquitin-conjugating enzyme]-L-cysteine + N(6)-ubiquitinyl-[acceptor protein]-L-lysine.. Its pathway is protein modification; protein ubiquitination. E3 ubiquitin protein ligase that is part of an apoptotic signaling pathway activated by endoplasmic reticulum stress. Stimulates the expression of proteins specific of the unfolded protein response (UPR), ubiquitinates BNIP1 and regulates its localization to the mitochondrion and induces calcium release from the endoplasmic reticulum that ultimately leads to cell apoptosis. Plays a role in the maintenance of intestinal homeostasis and clearance of enteric pathogens. Upon NOD2 stimulation, ubiquitinates the ER stress sensor activating transcription factor 6/ATF6 and promotes the unfolded protein response UPR. Participates in basal level of autophagy maintenance by regulating the ubiquitination of EPHB2. Upon stimulation by ligand EFNB1, ubiquitinates EPHB2 and further recruits MAP1LC3B for autophagy induction. Controls nutrient sensing by ubiquitinating Sestrin-2/SESN2, which is an intracellular sensor of cytosolic leucine and inhibitor of mTORC1 activity. In Bos taurus (Bovine), this protein is E3 ubiquitin-protein ligase RNF186.